Reading from the N-terminus, the 1183-residue chain is PAN2-PAN3 deadenylation complex catalytic subunit PAN2 (1183 aa).

The interval 1 to 24 is disordered; the sequence is MDGWTEISRIAATTQPPKGPSPHI. WD repeat units follow at residues 159–207, 269–309, and 327–366; these read DLNK…SIKS, PFPA…NVFL, and SKAPFMTNLEISENGDFFAFSDSYATMHLWTLNNSGSTIT. Residues 369–520 are linker; the sequence is FVNFPASIEQ…FQYKVPLSRK (152 aa). One can recognise a USP domain in the interval 521–919; that stretch reads KIPNCYSRLQ…KPVILVYHDS (399 aa). The Exonuclease domain maps to 977 to 1151; the sequence is IAIDAEFVNL…EDAYTALLLY (175 aa). The a divalent metal cation site is built by Asp980, Glu982, Asp1090, and Asp1143.

Belongs to the peptidase C19 family. PAN2 subfamily. As to quaternary structure, forms a heterotrimer with an asymmetric homodimer of the regulatory subunit PAN3 to form the poly(A)-nuclease (PAN) deadenylation complex. Requires a divalent metal cation as cofactor.

The protein resides in the cytoplasm. The catalysed reaction is Exonucleolytic cleavage of poly(A) to 5'-AMP.. With respect to regulation, positively regulated by the regulatory subunit PAN3. In terms of biological role, catalytic subunit of the poly(A)-nuclease (PAN) deadenylation complex, one of two cytoplasmic mRNA deadenylases involved in mRNA turnover. PAN specifically shortens poly(A) tails of RNA and the activity is stimulated by poly(A)-binding protein PAB1. PAN deadenylation is followed by rapid degradation of the shortened mRNA tails by the CCR4-NOT complex. Deadenylated mRNAs are then degraded by two alternative mechanisms, namely exosome-mediated 3'-5' exonucleolytic degradation, or deadenylation-dependent mRNA decaping and subsequent 5'-3' exonucleolytic degradation by XRN1. May also be involved in post-transcriptional maturation of mRNA poly(A) tails. This is PAN2-PAN3 deadenylation complex catalytic subunit PAN2 from Scheffersomyces stipitis (strain ATCC 58785 / CBS 6054 / NBRC 10063 / NRRL Y-11545) (Yeast).